Consider the following 128-residue polypeptide: uncharacterized protein (128 aa).

The helical transmembrane segment at 8–28 (YQAIYLIFAGFTVFGLLLHFY) threads the bilayer.

It localises to the membrane. This is an uncharacterized protein from Haemophilus influenzae (strain ATCC 51907 / DSM 11121 / KW20 / Rd).